Here is a 633-residue protein sequence, read N- to C-terminus: Chaperone protein HtpG (633 aa).

Positions 1-341 (MTAPHETMSF…SADLPLNVSR (341 aa)) are a; substrate-binding. Residues 342 to 562 (ELLQESRDVK…EGDMSGYLQR (221 aa)) are b. The tract at residues 563–633 (LLKQAGQKAP…YVQRVNKLLA (71 aa)) is c.

This sequence belongs to the heat shock protein 90 family. Homodimer.

It localises to the cytoplasm. In terms of biological role, molecular chaperone. Has ATPase activity. This is Chaperone protein HtpG from Cupriavidus taiwanensis (strain DSM 17343 / BCRC 17206 / CCUG 44338 / CIP 107171 / LMG 19424 / R1) (Ralstonia taiwanensis (strain LMG 19424)).